The following is a 180-amino-acid chain: GTP cyclohydrolase 1 (180 aa).

Positions 71, 74, and 142 each coordinate Zn(2+).

Belongs to the GTP cyclohydrolase I family. Toroid-shaped homodecamer, composed of two pentamers of five dimers.

It catalyses the reaction GTP + H2O = 7,8-dihydroneopterin 3'-triphosphate + formate + H(+). Its pathway is cofactor biosynthesis; 7,8-dihydroneopterin triphosphate biosynthesis; 7,8-dihydroneopterin triphosphate from GTP: step 1/1. This chain is GTP cyclohydrolase 1 (folE), found in Helicobacter pylori (strain ATCC 700392 / 26695) (Campylobacter pylori).